Consider the following 270-residue polypeptide: 23S rRNA (adenosine(1067)-2'-O)-methyltransferase (270 aa).

Residues Arg135, Arg165, Gly218, Ile238, and Leu247 each coordinate S-adenosyl-L-methionine.

Belongs to the class IV-like SAM-binding methyltransferase superfamily. RNA methyltransferase TsnR/AvirB family.

It carries out the reaction adenosine(1067) in 23S rRNA + S-adenosyl-L-methionine = 2'-O-methyladenosine(1067) in 23S rRNA + S-adenosyl-L-homocysteine + H(+). Specifically methylates the adenosine-1067 in 23S ribosomal RNA. Confers resistance to antibiotic thiostrepton. The sequence is that of 23S rRNA (adenosine(1067)-2'-O)-methyltransferase from Streptomyces laurentii.